A 284-amino-acid polypeptide reads, in one-letter code: MTIVNLAAYHFVSLDAIEQWRPLVTARCNELGLRGTILLAPEGINLFIAGPREATDAFVDYLRHDPLFEGKFATLQFKESLSDSQPFRRMLVRLKREIITMKKPAIKPELGRAPSVDARTLKAWLDRGHDDDGRPVVMLDTRNAFEVDVGTFDDALDYRIDKFSQFPEVIDANRADLEGKTVVSFCTGGIRCEKAAIHMKEIGIDHVYQLEGGILKYFEEVGGAHYHGDCFVFDYRTALNPQLQPTESVTCFACRAVVTPQAQQSPDYVPGKSCPACAQAAAAA.

The Rhodanese domain maps to 132–226; sequence DGRPVVMLDT…YFEEVGGAHY (95 aa). The Cysteine persulfide intermediate role is filled by C186.

It belongs to the TrhO family.

The catalysed reaction is uridine(34) in tRNA + AH2 + O2 = 5-hydroxyuridine(34) in tRNA + A + H2O. Catalyzes oxygen-dependent 5-hydroxyuridine (ho5U) modification at position 34 in tRNAs. The chain is tRNA uridine(34) hydroxylase from Burkholderia vietnamiensis (strain G4 / LMG 22486) (Burkholderia cepacia (strain R1808)).